The following is an 848-amino-acid chain: Adenylate cyclase (848 aa).

A catalytic region spans residues 1–535; sequence MYLYIETLKQ…DVSHHFPLRL (535 aa). Positions 541-848 are regulatory; sequence KALYSPCEIR…DAPLLQQYFS (308 aa). A Phosphohistidine; by CRR modification is found at His-609.

It belongs to the adenylyl cyclase class-1 family.

The protein localises to the cytoplasm. It catalyses the reaction ATP = 3',5'-cyclic AMP + diphosphate. This is Adenylate cyclase (cyaA) from Salmonella typhi.